The sequence spans 283 residues: Pantothenate synthetase (283 aa).

30–37 contacts ATP; it reads MGNLHLGH. Histidine 37 acts as the Proton donor in catalysis. Glutamine 61 contributes to the (R)-pantoate binding site. Residue glutamine 61 participates in beta-alanine binding. 149-152 contributes to the ATP binding site; the sequence is GQKD. Glutamine 155 is a binding site for (R)-pantoate. Residues isoleucine 178 and 186-189 each bind ATP; that span reads MSSR.

It belongs to the pantothenate synthetase family. Homodimer.

It is found in the cytoplasm. It carries out the reaction (R)-pantoate + beta-alanine + ATP = (R)-pantothenate + AMP + diphosphate + H(+). The protein operates within cofactor biosynthesis; (R)-pantothenate biosynthesis; (R)-pantothenate from (R)-pantoate and beta-alanine: step 1/1. In terms of biological role, catalyzes the condensation of pantoate with beta-alanine in an ATP-dependent reaction via a pantoyl-adenylate intermediate. The chain is Pantothenate synthetase from Shewanella halifaxensis (strain HAW-EB4).